We begin with the raw amino-acid sequence, 406 residues long: Cysteine desulfurase (406 aa).

Position 226 is an N6-(pyridoxal phosphate)lysine (Lys226). Cys364 serves as the catalytic Cysteine persulfide intermediate.

It belongs to the class-V pyridoxal-phosphate-dependent aminotransferase family. Csd subfamily. As to quaternary structure, homodimer. Interacts with SufE and the SufBCD complex composed of SufB, SufC and SufD. The interaction with SufE is required to mediate the direct transfer of the sulfur atom from the S-sulfanylcysteine. Pyridoxal 5'-phosphate is required as a cofactor.

The protein localises to the cytoplasm. The catalysed reaction is (sulfur carrier)-H + L-cysteine = (sulfur carrier)-SH + L-alanine. The enzyme catalyses L-selenocysteine + AH2 = hydrogenselenide + L-alanine + A + H(+). It participates in cofactor biosynthesis; iron-sulfur cluster biosynthesis. Its function is as follows. Cysteine desulfurases mobilize the sulfur from L-cysteine to yield L-alanine, an essential step in sulfur metabolism for biosynthesis of a variety of sulfur-containing biomolecules. Component of the suf operon, which is activated and required under specific conditions such as oxidative stress and iron limitation. Acts as a potent selenocysteine lyase in vitro, that mobilizes selenium from L-selenocysteine. Selenocysteine lyase activity is however unsure in vivo. The sequence is that of Cysteine desulfurase from Escherichia coli O7:K1 (strain IAI39 / ExPEC).